Reading from the N-terminus, the 209-residue chain is MSASMAATSTSSATATTFIKCVTVGDGAVGKTCLLISYTSNTFPTDYVPTVFDNFNANVLVDGKTVNLGLWDTAGQEDYNRVRPLSYRGADVFILAFSLISRPSFENIAKKWVPELRHYAPTVPIVLVGTKSDLRDNMQFPKNYPGACTIFPEQGQELRKEIGALAYIECSSKAQMNVKAVFDEAIKVVLHPPSKTKKRKRKIGLCHVL.

Residue 25 to 32 participates in GTP binding; that stretch reads GDGAVGKT. The Effector region motif lies at 47–55; the sequence is YVPTVFDNF. GTP-binding positions include 72 to 76 and 130 to 133; these read DTAGQ and TKSD. Cys-206 bears the Cysteine methyl ester mark. Residue Cys-206 is the site of S-geranylgeranyl cysteine attachment. Positions 207 to 209 are cleaved as a propeptide — removed in mature form; sequence HVL.

The protein belongs to the small GTPase superfamily. Rho family. As to quaternary structure, interacts with SPK1.

The protein localises to the cytoplasm. It is found in the membrane. Functionally, inactive GDP-bound Rho GTPases reside in the cytosol, are found in a complex with Rho GDP-dissociation inhibitors (Rho GDIs), and are released from the GDI protein in order to translocate to membranes upon activation. The polypeptide is Rac-like GTP-binding protein ARAC9 (ARAC9) (Arabidopsis thaliana (Mouse-ear cress)).